We begin with the raw amino-acid sequence, 578 residues long: Avenacosidase 2 (578 aa).

Residues 1–57 (MALLCSALSNSTHPSFRSHIAGANSENLWHLSAHPAQKSKRRCNLTLSSRAAARISS) constitute a chloroplast transit peptide. A beta-D-glucoside-binding positions include Q89, H193, and 238 to 239 (NE). The Proton donor role is filled by E239. The cysteines at positions 258 and 264 are disulfide-linked. A beta-D-glucoside is bound by residues Y381, E454, W504, 511-512 (EW), and F520. E454 serves as the catalytic Nucleophile.

This sequence belongs to the glycosyl hydrolase 1 family. In terms of assembly, heteromultimer with P60A in a 1:1 stoichiometry. Aggregates to form the fibrillar stromacentre.

It is found in the plastid. The protein localises to the chloroplast stroma. It carries out the reaction avenacoside B + H2O = 26-desgluco-avenacoside B + D-glucose. Its function is as follows. Beta-glucosidase acting as a preformed defense system. Hydrolyzes the bisdesmosides avenacosides A and B to 26-desgluco-avenacosides exhibiting fungicidal activity. Can use beta-fucoside &gt; beta-glucoside &gt; beta-galactoside &gt; beta-xyloside as substrates, but not alpha-glycosides, beta-thioglucosides and disaccharides. This chain is Avenacosidase 2 (P60B), found in Avena sativa (Oat).